A 446-amino-acid chain; its full sequence is Actin-related protein 6 (446 aa).

The span at 1-11 shows a compositional bias: basic residues; sequence MTGRGGAKKSR. Residues 1-24 form a disordered region; that stretch reads MTGRGGAKKSRAAGPAPPTTTLVL.

It belongs to the actin family. ARP6 subfamily. As to quaternary structure, component of the SWR1 chromatin remodeling complex.

Its subcellular location is the cytoplasm. It localises to the cytoskeleton. It is found in the nucleus. Functionally, component of the SWR1 complex which mediates the ATP-dependent exchange of histone H2A for the H2A variant H2A.Z leading to transcriptional regulation of selected genes by chromatin remodeling. Involved in chromosome stability. The sequence is that of Actin-related protein 6 (arp-6) from Neurospora crassa (strain ATCC 24698 / 74-OR23-1A / CBS 708.71 / DSM 1257 / FGSC 987).